The chain runs to 229 residues: 7-cyano-7-deazaguanine synthase (229 aa).

An ATP-binding site is contributed by 9 to 19 (LSGGLDSATVL). The Zn(2+) site is built by Cys-188, Cys-198, Cys-201, and Cys-204.

It belongs to the QueC family. The cofactor is Zn(2+).

The catalysed reaction is 7-carboxy-7-deazaguanine + NH4(+) + ATP = 7-cyano-7-deazaguanine + ADP + phosphate + H2O + H(+). Its pathway is purine metabolism; 7-cyano-7-deazaguanine biosynthesis. In terms of biological role, catalyzes the ATP-dependent conversion of 7-carboxy-7-deazaguanine (CDG) to 7-cyano-7-deazaguanine (preQ(0)). The chain is 7-cyano-7-deazaguanine synthase from Methylobacillus flagellatus (strain ATCC 51484 / DSM 6875 / VKM B-1610 / KT).